The following is a 773-amino-acid chain: DNA gyrase subunit B (773 aa).

The region spanning 416–530 (SEIFLVEGDS…QGHVFIAQAP (115 aa)) is the Toprim domain. Residues E422, D495, and D497 each contribute to the Mg(2+) site.

It belongs to the type II topoisomerase GyrB family. As to quaternary structure, heterotetramer, composed of two GyrA and two GyrB chains. In the heterotetramer, GyrA contains the active site tyrosine that forms a transient covalent intermediate with DNA, while GyrB binds cofactors and catalyzes ATP hydrolysis. Requires Mg(2+) as cofactor. Mn(2+) serves as cofactor. Ca(2+) is required as a cofactor.

The protein localises to the cytoplasm. It catalyses the reaction ATP-dependent breakage, passage and rejoining of double-stranded DNA.. Its function is as follows. A type II topoisomerase that negatively supercoils closed circular double-stranded (ds) DNA in an ATP-dependent manner to modulate DNA topology and maintain chromosomes in an underwound state. Negative supercoiling favors strand separation, and DNA replication, transcription, recombination and repair, all of which involve strand separation. Also able to catalyze the interconversion of other topological isomers of dsDNA rings, including catenanes and knotted rings. Type II topoisomerases break and join 2 DNA strands simultaneously in an ATP-dependent manner. This chain is DNA gyrase subunit B, found in Helicobacter pylori (strain J99 / ATCC 700824) (Campylobacter pylori J99).